The chain runs to 1077 residues: MPKRTDIQSILILGAGPIVIGQACEFDYSGAQACKALREEGYRVILVNSNPATIMTDPEMADATYIEPIQWEVVRKIIEKERPDAVLPTMGGQTALNCALDLEKHGVLAEFGVEMIGATADAIDKAEDRSRFDKAMKSIGLECPRADTAKTMEEAYKVLDMVGFPCIIRPSFTMGGTGGGIAYNKEEFEEICRRGLDLSPTNELLIDESLIGWKEYEMEVVRDKADNCIIVCSIENFDPMGIHTGDSITVAPAQTLTDKEYQLMRNASLAVLREIGVETGGSNVQFGINPKDGRMVIIEMNPRVSRSSALASKATGFPIAKIAAKLAVGFTLDELQNDITGGATPASFEPTIDYVVTKIPRFNFEKFAGANDRLTTQMKSVGEVMAIGRNQQESLHKALRGLEVGATGFDEMVDLDAPDALTKIRHELKEAGAERIWYIADAFRAGMSVDGVFNLTNIDRWFLVQIEELVKLEEQVKAGGFAGLTEEVLRQMKRKGFSDARLSKLLGVAESEIRRLRDQFDIHPVYKRVDTCAAEFSSDTAYMYSSYDEECEANPTDKDKIMVLGGGPNRIGQGIEFDYCCVHASLALREDGYETIMVNCNPETVSTDYDTSDRLYFEPVTLEDVLSIARVEKPKGVIVQYGGQTPLKLARALEAAGVPIIGTSPDAIDRAEDRERFQAAVERLGLLQPQNATVTAMEQAVEKSREIGFPLVVRPSYVLGGRAMEIVYDEQDLRRYFNEAVSVSNESPVLLDRFLDDATEVDIDAICDGERVVIGGIMEHIEQAGVHSGDSACSLPAYTLSQEIQDKMREQVEKLAFELGVRGLMNTQFAVKDNEVYLIEVNPRAARTVPFVSKATGAPLAKIAARVMAGQSLESQGFTKEIIPPYYSVKEVVLPFNKFPGVDPLLGPEMRSTGEVMGVGATFAEAYAKAELGCGSVYPEGGRALLSVREGDKQRVVDLASKLVKLGYQLDATHGTAVILGEAGINPRLVNKVHEGRPHILDRIKNNEYTYIVNTAAGRQAIEDSKVLRRGALAEKVNYTTTLNAAFATCMSHTADAKASVTSVQELHAKVKASLEA.

Positions 1–403 (MPKRTDIQSI…SLHKALRGLE (403 aa)) are carboxyphosphate synthetic domain. The ATP site is built by Arg129, Arg169, Gly175, Gly176, Glu208, Leu210, Glu215, Gly241, Ile242, His243, Gln285, and Glu299. The ATP-grasp 1 domain maps to 133–328 (DKAMKSIGLE…IAKIAAKLAV (196 aa)). Mg(2+)-binding residues include Gln285, Glu299, and Asn301. 3 residues coordinate Mn(2+): Gln285, Glu299, and Asn301. Residues 404 to 553 (VGATGFDEMV…YSSYDEECEA (150 aa)) form an oligomerization domain region. The segment at 554-935 (NPTDKDKIMV…AYAKAELGCG (382 aa)) is carbamoyl phosphate synthetic domain. Residues 678 to 869 (QAAVERLGLL…LAKIAARVMA (192 aa)) enclose the ATP-grasp 2 domain. Residues Arg714, Arg753, Leu755, Glu760, Gly785, Val786, His787, Ser788, Gln828, and Glu840 each coordinate ATP. 3 residues coordinate Mg(2+): Gln828, Glu840, and Asn842. Mn(2+)-binding residues include Gln828, Glu840, and Asn842. Residues 936 to 1077 (SVYPEGGRAL…HAKVKASLEA (142 aa)) enclose the MGS-like domain. Positions 936-1077 (SVYPEGGRAL…HAKVKASLEA (142 aa)) are allosteric domain.

This sequence belongs to the CarB family. As to quaternary structure, composed of two chains; the small (or glutamine) chain promotes the hydrolysis of glutamine to ammonia, which is used by the large (or ammonia) chain to synthesize carbamoyl phosphate. Tetramer of heterodimers (alpha,beta)4. It depends on Mg(2+) as a cofactor. The cofactor is Mn(2+).

It catalyses the reaction hydrogencarbonate + L-glutamine + 2 ATP + H2O = carbamoyl phosphate + L-glutamate + 2 ADP + phosphate + 2 H(+). It carries out the reaction hydrogencarbonate + NH4(+) + 2 ATP = carbamoyl phosphate + 2 ADP + phosphate + 2 H(+). The protein operates within amino-acid biosynthesis; L-arginine biosynthesis; carbamoyl phosphate from bicarbonate: step 1/1. Its pathway is pyrimidine metabolism; UMP biosynthesis via de novo pathway; (S)-dihydroorotate from bicarbonate: step 1/3. Its function is as follows. Large subunit of the glutamine-dependent carbamoyl phosphate synthetase (CPSase). CPSase catalyzes the formation of carbamoyl phosphate from the ammonia moiety of glutamine, carbonate, and phosphate donated by ATP, constituting the first step of 2 biosynthetic pathways, one leading to arginine and/or urea and the other to pyrimidine nucleotides. The large subunit (synthetase) binds the substrates ammonia (free or transferred from glutamine from the small subunit), hydrogencarbonate and ATP and carries out an ATP-coupled ligase reaction, activating hydrogencarbonate by forming carboxy phosphate which reacts with ammonia to form carbamoyl phosphate. This is Carbamoyl phosphate synthase large chain from Vibrio parahaemolyticus serotype O3:K6 (strain RIMD 2210633).